Here is a 507-residue protein sequence, read N- to C-terminus: Maturase K (507 aa).

The protein belongs to the intron maturase 2 family. MatK subfamily.

It is found in the plastid. Its subcellular location is the chloroplast. In terms of biological role, usually encoded in the trnK tRNA gene intron. Probably assists in splicing its own and other chloroplast group II introns. This Buxus microphylla (Littleleaf boxwood) protein is Maturase K.